Here is a 326-residue protein sequence, read N- to C-terminus: Elongation factor Ts (326 aa).

Residues 80-83 (TDFV) are involved in Mg(2+) ion dislocation from EF-Tu.

Belongs to the EF-Ts family.

It is found in the cytoplasm. Associates with the EF-Tu.GDP complex and induces the exchange of GDP to GTP. It remains bound to the aminoacyl-tRNA.EF-Tu.GTP complex up to the GTP hydrolysis stage on the ribosome. In Rhodopirellula baltica (strain DSM 10527 / NCIMB 13988 / SH1), this protein is Elongation factor Ts.